Reading from the N-terminus, the 269-residue chain is Regulating synaptic membrane exocytosis protein 4 (269 aa).

One can recognise a C2 domain in the interval Pro-115–Tyr-233. 2 positions are modified to phosphoserine: Ser-254 and Ser-257.

In terms of assembly, binds PPFIA3. Brain specific.

It localises to the synapse. In terms of biological role, regulates synaptic membrane exocytosis. The polypeptide is Regulating synaptic membrane exocytosis protein 4 (Rims4) (Rattus norvegicus (Rat)).